A 427-amino-acid polypeptide reads, in one-letter code: Gamma-glutamyl phosphate reductase (427 aa).

It belongs to the gamma-glutamyl phosphate reductase family.

It localises to the cytoplasm. The catalysed reaction is L-glutamate 5-semialdehyde + phosphate + NADP(+) = L-glutamyl 5-phosphate + NADPH + H(+). The protein operates within amino-acid biosynthesis; L-proline biosynthesis; L-glutamate 5-semialdehyde from L-glutamate: step 2/2. Catalyzes the NADPH-dependent reduction of L-glutamate 5-phosphate into L-glutamate 5-semialdehyde and phosphate. The product spontaneously undergoes cyclization to form 1-pyrroline-5-carboxylate. This is Gamma-glutamyl phosphate reductase from Sinorhizobium medicae (strain WSM419) (Ensifer medicae).